The primary structure comprises 629 residues: 1-deoxy-D-xylulose-5-phosphate synthase (629 aa).

Thiamine diphosphate is bound by residues H72 and 113 to 115 (GHA). D144 serves as a coordination point for Mg(2+). Thiamine diphosphate is bound by residues 145-146 (GA), N174, Y287, and E370. N174 is a binding site for Mg(2+).

It belongs to the transketolase family. DXPS subfamily. In terms of assembly, homodimer. The cofactor is Mg(2+). Thiamine diphosphate serves as cofactor.

It carries out the reaction D-glyceraldehyde 3-phosphate + pyruvate + H(+) = 1-deoxy-D-xylulose 5-phosphate + CO2. It participates in metabolic intermediate biosynthesis; 1-deoxy-D-xylulose 5-phosphate biosynthesis; 1-deoxy-D-xylulose 5-phosphate from D-glyceraldehyde 3-phosphate and pyruvate: step 1/1. Its function is as follows. Catalyzes the acyloin condensation reaction between C atoms 2 and 3 of pyruvate and glyceraldehyde 3-phosphate to yield 1-deoxy-D-xylulose-5-phosphate (DXP). In Prochlorococcus marinus (strain AS9601), this protein is 1-deoxy-D-xylulose-5-phosphate synthase.